The following is an 868-amino-acid chain: Monofunctional pimaradiene synthase (868 aa).

Mg(2+)-binding residues include aspartate 620, aspartate 624, asparagine 764, threonine 768, and glutamate 772.

Belongs to the terpene synthase family. Tpsd subfamily. Requires Mg(2+) as cofactor.

The catalysed reaction is (+)-copalyl diphosphate = (-)-pimara-8(14),15-diene + diphosphate. It functions in the pathway terpene metabolism; oleoresin biosynthesis. Involved in defensive oleoresin formation in conifers in response to insect attack or other injury. Involved in diterpene (C20) olefins biosynthesis. Monofunctional enzyme lacking the DXDD motif in the class II active site relevant for the cyclization of geranylgeranyl diphosphate (GGPP). Requires (+)-copalyl diphosphate ((+)-CPP) as substrate, but no activity with GGPP or ent-CPP. Pimaradiene is the major products of the enzyme. The chain is Monofunctional pimaradiene synthase from Pinus contorta (Shore pine).